Consider the following 63-residue polypeptide: Crotasin (63 aa).

Positions 1–22 (MKILYLLSAFLFLAFLSESGNA) are cleaved as a signal peptide. Intrachain disulfides connect Cys-26–Cys-56, Cys-33–Cys-50, and Cys-38–Cys-57.

Highly expressed in pancreas, heart, liver, brain and kidney. Expressed to a low extent in the venom gland.

It is found in the secreted. The polypeptide is Crotasin (Crotalus durissus terrificus (South American rattlesnake)).